Here is a 238-residue protein sequence, read N- to C-terminus: Probable solute-binding protein AdeT2 (238 aa).

It belongs to the bacterial solute-binding protein 7 family.

Functionally, mediates antimicrobial resistance via active efflux. Contributes to resistance to antibiotics such as chloramphenicol, erythromycin and novobiocin. May be part of a tripartite ATP-independent periplasmic (TRAP) transport system. The polypeptide is Probable solute-binding protein AdeT2 (Acinetobacter baumannii).